The sequence spans 883 residues: Lethal(3)malignant brain tumor-like protein 3 (883 aa).

The tract at residues 1-64 is interaction with RBPJ. Required for transcription repressor activity on Notch target genes; sequence MTESASSTSG…VKKATATTTW (64 aa). Over residues 146 to 156 the composition is skewed to basic and acidic residues; that stretch reads HAKDKDQKDER. The tract at residues 146–223 is disordered; the sequence is HAKDKDQKDE…RGDSAVLKQG (78 aa). Acidic residues-rich tracts occupy residues 157 to 166 and 185 to 194; these read DGGEDNDEED and DDGEERDDEM. MBT repeat units follow at residues 232–332, 340–439, and 448–543; these read WCWA…LRPP, FNWQ…LITP, and FSWD…LQAP. The CCHHC-type; degenerate zinc finger occupies 549–593; the sequence is LMEPSETGGCPTLGCRGVGHFKKSRYLGTQSGANCPYSEINLSKE. The segment at 595 to 768 is disordered; the sequence is IFPDRLSGDT…TQQQAQTQQQ (174 aa). The span at 616–662 shows a compositional bias: basic and acidic residues; sequence KRMDTRESSSSPETREKHANNFKEDSEKKKENEVKTSAEAKVVREEP. K638 is covalently cross-linked (Glycyl lysine isopeptide (Lys-Gly) (interchain with G-Cter in SUMO2)). Composition is skewed to low complexity over residues 663 to 742 and 749 to 768; these read TPSV…QQPQ and QPQQVQQAQPTQQQAQTQQQ. An SAM domain is found at 811–875; that stretch reads WSTDEVSEFI…FNSILMFKAA (65 aa).

In terms of assembly, interacts with RNF2. Interacts (via SAM domain) with SAMD1 (via SAM domain); the interaction mediates L3MBTL3 binding to chromatin. Interacts with RBPJ; the interaction is required for L3MBTL3 localization to chromatin and is impaired the Notch-derived peptides containing the intracellular domain (NICD). Interacts (via SAM domain) with KDM1A. Interacts with DCAF5. Interacts with DNMT1. Interacts with E2F1. Interacts with SOX2. Interacts with SFMBT1. In terms of tissue distribution, detected in hematopoietic progenitor cells in fetal liver. Detected in adult bone marrow, heart, brain, spleen, lung, liver, kidney and testis.

It localises to the nucleus. Functionally, is a negative regulator of Notch target genes expression, required for RBPJ-mediated transcriptional repression. It recruits KDM1A to Notch-responsive elements and promotes KDM1A-mediated H3K4me demethylation. Involved in the regulation of ubiquitin-dependent degradation of a set of methylated non-histone proteins, including SOX2. It acts as an adapter recruiting the CRL4-DCAF5 E3 ubiquitin ligase complex to methylated target proteins. Also involved in the regulation of ubiquitin-dependent degradation of methylated DNMT1 and E2F1. Required for normal maturation of myeloid progenitor cells. The sequence is that of Lethal(3)malignant brain tumor-like protein 3 from Mus musculus (Mouse).